The chain runs to 360 residues: MLSSRLQFAQQTARKFSISAKDGSGKLSTLAVKVHGGSRYADKEGIAHLLSRFNFHNTGNKSALRLVRESELLGGKFESSVDREYITLKATFLKEDLPYFVNALGNVLYKTSFRPHELPESVLPAAKYDISVSETNPINKAEDLLYNVSFRKDLGNTVLYRGVEKVTLDDIKAYANKVYTKENIEIVGQGVNEADLKRFVNDSLIGSLPTGSKLAAQAQPKFFSGEARLSAPGASVAAIAVPVTKEQFATYEVLAKYLTSALSELSPLIDSAKLDKYANAGLFSLYVKGEDASVVAENIKKVVDTLKKDVDISAAKEYTALQLSLENAPIDVSNVKNVKLDKFSYAAVGNVAKLPFADEL.

A mitochondrion-targeting transit peptide spans 1 to 15 (MLSSRLQFAQQTARK).

Belongs to the peptidase M16 family. UQCRC2/QCR2 subfamily. As to quaternary structure, component of the ubiquinol-cytochrome c oxidoreductase (cytochrome b-c1 complex, complex III, CIII), a multisubunit enzyme composed of 3 respiratory subunits cytochrome b, cytochrome c1 and Rieske protein, 2 core protein subunits, and additional low-molecular weight protein subunits. The complex exists as an obligatory dimer and forms supercomplexes (SCs) in the inner mitochondrial membrane with cytochrome c oxidase (complex IV, CIV).

The protein resides in the mitochondrion inner membrane. Functionally, component of the ubiquinol-cytochrome c oxidoreductase, a multisubunit transmembrane complex that is part of the mitochondrial electron transport chain which drives oxidative phosphorylation. The respiratory chain contains 3 multisubunit complexes succinate dehydrogenase (complex II, CII), ubiquinol-cytochrome c oxidoreductase (cytochrome b-c1 complex, complex III, CIII) and cytochrome c oxidase (complex IV, CIV), that cooperate to transfer electrons derived from NADH and succinate to molecular oxygen, creating an electrochemical gradient over the inner membrane that drives transmembrane transport and the ATP synthase. The cytochrome b-c1 complex catalyzes electron transfer from ubiquinol to cytochrome c, linking this redox reaction to translocation of protons across the mitochondrial inner membrane, with protons being carried across the membrane as hydrogens on the quinol. In the process called Q cycle, 2 protons are consumed from the matrix, 4 protons are released into the intermembrane space and 2 electrons are passed to cytochrome c. The protein is Cytochrome b-c1 complex subunit 2, mitochondrial (QCR2) of Kluyveromyces lactis (strain ATCC 8585 / CBS 2359 / DSM 70799 / NBRC 1267 / NRRL Y-1140 / WM37) (Yeast).